Here is a 548-residue protein sequence, read N- to C-terminus: Probable malate:quinone oxidoreductase (548 aa).

The tract at residues Lys-522–Leu-548 is disordered. A compositionally biased stretch (basic and acidic residues) spans Ala-539–Leu-548.

The protein belongs to the MQO family. FAD serves as cofactor.

The enzyme catalyses (S)-malate + a quinone = a quinol + oxaloacetate. Its pathway is carbohydrate metabolism; tricarboxylic acid cycle; oxaloacetate from (S)-malate (quinone route): step 1/1. This is Probable malate:quinone oxidoreductase from Escherichia fergusonii (strain ATCC 35469 / DSM 13698 / CCUG 18766 / IAM 14443 / JCM 21226 / LMG 7866 / NBRC 102419 / NCTC 12128 / CDC 0568-73).